The primary structure comprises 516 residues: 2,3-bisphosphoglycerate-independent phosphoglycerate mutase (516 aa).

The Mn(2+) site is built by Asp-15 and Ser-65. The active-site Phosphoserine intermediate is Ser-65. Residues His-126, 156 to 157 (RD), Arg-188, Arg-194, 263 to 266 (RADR), and Lys-336 contribute to the substrate site. Mn(2+) contacts are provided by Asp-403, His-407, Asp-444, His-445, and His-463.

This sequence belongs to the BPG-independent phosphoglycerate mutase family. As to quaternary structure, monomer. The cofactor is Mn(2+).

It carries out the reaction (2R)-2-phosphoglycerate = (2R)-3-phosphoglycerate. The protein operates within carbohydrate degradation; glycolysis; pyruvate from D-glyceraldehyde 3-phosphate: step 3/5. Its function is as follows. Catalyzes the interconversion of 2-phosphoglycerate and 3-phosphoglycerate. In Francisella tularensis subsp. holarctica (strain OSU18), this protein is 2,3-bisphosphoglycerate-independent phosphoglycerate mutase.